The chain runs to 126 residues: CD59 glycoprotein (126 aa).

An N-terminal signal peptide occupies residues 1 to 22; sequence MRARRGFILLLLLAVLCSTGVS. The 88-residue stretch at 23 to 110 folds into the UPAR/Ly6 domain; sequence LRCYNCLDPV…NGAISLLGKT (88 aa). 5 cysteine pairs are disulfide-bonded: cysteine 25–cysteine 48, cysteine 28–cysteine 35, cysteine 41–cysteine 61, cysteine 67–cysteine 85, and cysteine 86–cysteine 91. Residue asparagine 38 is glycosylated (N-linked (GlcNAc...) asparagine). Asparagine 101 is lipidated: GPI-anchor amidated asparagine. Positions 102–126 are cleaved as a propeptide — removed in mature form; sequence GAISLLGKTALLVTSVLAAILKPCF.

In terms of assembly, interacts with T-cell surface antigen CD2. N- and O-glycosylated.

The protein resides in the cell membrane. The protein localises to the secreted. Potent inhibitor of the complement membrane attack complex (MAC) action, which protects self-cells from damage during complement activation. Acts by binding to the beta-haipins of C8 (C8A and C8B) components of the assembling MAC, forming an intermolecular beta-sheet that prevents incorporation of the multiple copies of C9 required for complete formation of the osmolytic pore. The sequence is that of CD59 glycoprotein from Rattus norvegicus (Rat).